Here is a 269-residue protein sequence, read N- to C-terminus: 3-methyl-2-oxobutanoate hydroxymethyltransferase (269 aa).

The Mg(2+) site is built by D43 and D82. Residues 43-44 (DS), D82, and K110 contribute to the 3-methyl-2-oxobutanoate site. Residue E112 participates in Mg(2+) binding. E179 functions as the Proton acceptor in the catalytic mechanism.

It belongs to the PanB family. As to quaternary structure, homodecamer; pentamer of dimers. Mg(2+) serves as cofactor.

The protein resides in the cytoplasm. It catalyses the reaction 3-methyl-2-oxobutanoate + (6R)-5,10-methylene-5,6,7,8-tetrahydrofolate + H2O = 2-dehydropantoate + (6S)-5,6,7,8-tetrahydrofolate. It functions in the pathway cofactor biosynthesis; (R)-pantothenate biosynthesis; (R)-pantoate from 3-methyl-2-oxobutanoate: step 1/2. Catalyzes the reversible reaction in which hydroxymethyl group from 5,10-methylenetetrahydrofolate is transferred onto alpha-ketoisovalerate to form ketopantoate. This Acinetobacter baylyi (strain ATCC 33305 / BD413 / ADP1) protein is 3-methyl-2-oxobutanoate hydroxymethyltransferase.